The chain runs to 231 residues: Insertion sequence IS1162 putative ATP-binding protein (231 aa).

Residue Gly107–Thr114 coordinates ATP.

It belongs to the IS21/IS1162 putative ATP-binding protein family.

The sequence is that of Insertion sequence IS1162 putative ATP-binding protein from Pseudomonas fluorescens.